The primary structure comprises 391 residues: Ribonuclease 3-like protein 2 (391 aa).

Residues 7–26 (PEYNFPAITRCSLSNSLPHR) carry the Nuclear export signal motif. One can recognise an RNase III domain in the interval 60 to 203 (MEAVEKILNY…LAGAVYVDVN (144 aa)). Positions 96, 189, and 192 each coordinate Mg(2+). DRBM domains lie at 218–294 (EPIV…KLSE) and 313–387 (HAKT…ALRK). Cysteine 240 and cysteine 322 are disulfide-bonded. Residues 371–387 (KKAESSSAYHMIRALRK) carry the Bipartite nuclear localization motif.

As to quaternary structure, homodimer; disulfide-linked. Mg(2+) is required as a cofactor. Mn(2+) serves as cofactor. In terms of tissue distribution, expressed in seeds, leaves and flower buds.

The protein localises to the nucleus. It is found in the cytoplasm. In terms of biological role, ribonuclease that cleaves double-stranded RNA (dsRNA). Required for 3'-external transcribed spacer (ETS) cleavage of the pre-rRNA precursors. May promote the production of 21 nucleotide small interfering RNA (siRNA) during post-transcriptional gene silencing (PTGS). The sequence is that of Ribonuclease 3-like protein 2 (RTL2) from Arabidopsis thaliana (Mouse-ear cress).